A 649-amino-acid polypeptide reads, in one-letter code: UvrABC system protein B (649 aa).

The Helicase ATP-binding domain maps to 25–178 (EHYKDGIKEQ…EDILKELVKM (154 aa)). 38-45 (GVTGSGKT) lines the ATP pocket. A Beta-hairpin motif is present at residues 91–114 (YYDYYQPEAYVAQTDTFIDKESAI). A Helicase C-terminal domain is found at 428 to 594 (QVDDLLGEIR…SVVRKLKDKK (167 aa)). A UVR domain is found at 614-649 (DEIIKELEKEMKQAAKDLNFEKAAKLRDRIMELKEE).

It belongs to the UvrB family. As to quaternary structure, forms a heterotetramer with UvrA during the search for lesions. Interacts with UvrC in an incision complex.

The protein localises to the cytoplasm. In terms of biological role, the UvrABC repair system catalyzes the recognition and processing of DNA lesions. A damage recognition complex composed of 2 UvrA and 2 UvrB subunits scans DNA for abnormalities. Upon binding of the UvrA(2)B(2) complex to a putative damaged site, the DNA wraps around one UvrB monomer. DNA wrap is dependent on ATP binding by UvrB and probably causes local melting of the DNA helix, facilitating insertion of UvrB beta-hairpin between the DNA strands. Then UvrB probes one DNA strand for the presence of a lesion. If a lesion is found the UvrA subunits dissociate and the UvrB-DNA preincision complex is formed. This complex is subsequently bound by UvrC and the second UvrB is released. If no lesion is found, the DNA wraps around the other UvrB subunit that will check the other stand for damage. In Methanosphaera stadtmanae (strain ATCC 43021 / DSM 3091 / JCM 11832 / MCB-3), this protein is UvrABC system protein B.